The primary structure comprises 184 residues: ATP synthase subunit b, chloroplastic (184 aa).

A helical transmembrane segment spans residues 27 to 49; that stretch reads LATNPINLSVVFGVLIFFGKGVL.

Belongs to the ATPase B chain family. In terms of assembly, F-type ATPases have 2 components, F(1) - the catalytic core - and F(0) - the membrane proton channel. F(1) has five subunits: alpha(3), beta(3), gamma(1), delta(1), epsilon(1). F(0) has four main subunits: a(1), b(1), b'(1) and c(10-14). The alpha and beta chains form an alternating ring which encloses part of the gamma chain. F(1) is attached to F(0) by a central stalk formed by the gamma and epsilon chains, while a peripheral stalk is formed by the delta, b and b' chains.

Its subcellular location is the plastid. The protein resides in the chloroplast thylakoid membrane. Functionally, f(1)F(0) ATP synthase produces ATP from ADP in the presence of a proton or sodium gradient. F-type ATPases consist of two structural domains, F(1) containing the extramembraneous catalytic core and F(0) containing the membrane proton channel, linked together by a central stalk and a peripheral stalk. During catalysis, ATP synthesis in the catalytic domain of F(1) is coupled via a rotary mechanism of the central stalk subunits to proton translocation. Component of the F(0) channel, it forms part of the peripheral stalk, linking F(1) to F(0). The protein is ATP synthase subunit b, chloroplastic of Barbarea verna (Land cress).